The sequence spans 317 residues: uncharacterized protein (317 aa).

7 helical membrane passes run 18–38, 58–78, 92–112, 130–150, 159–179, 202–222, and 252–272; these read FWLISLVVAFLPLGLYGLVII, IILSWMLFFLWFNVIVNGFIF, FLGSFIYSGGNNFGGVSWWSF, LFSASFLLTTSSSIYELAWAV, LFHIKVQPISILLAVIFKLLP, CSFLNPFKIKTLFIPVLLSTV, and NLLNGVFLLVGLLLFSILLIA.

It belongs to the CbiQ family.

It localises to the cell membrane. This is an uncharacterized protein from Mycoplasma genitalium (strain ATCC 33530 / DSM 19775 / NCTC 10195 / G37) (Mycoplasmoides genitalium).